A 187-amino-acid chain; its full sequence is NADH-quinone oxidoreductase subunit B (187 aa).

4 residues coordinate [4Fe-4S] cluster: C55, C56, C121, and C150.

This sequence belongs to the complex I 20 kDa subunit family. NDH-1 is composed of 14 different subunits. Subunits NuoB, C, D, E, F, and G constitute the peripheral sector of the complex. Requires [4Fe-4S] cluster as cofactor.

It localises to the cell inner membrane. The enzyme catalyses a quinone + NADH + 5 H(+)(in) = a quinol + NAD(+) + 4 H(+)(out). Functionally, NDH-1 shuttles electrons from NADH, via FMN and iron-sulfur (Fe-S) centers, to quinones in the respiratory chain. The immediate electron acceptor for the enzyme in this species is believed to be ubiquinone. Couples the redox reaction to proton translocation (for every two electrons transferred, four hydrogen ions are translocated across the cytoplasmic membrane), and thus conserves the redox energy in a proton gradient. The protein is NADH-quinone oxidoreductase subunit B of Bdellovibrio bacteriovorus (strain ATCC 15356 / DSM 50701 / NCIMB 9529 / HD100).